Reading from the N-terminus, the 529-residue chain is Cytochrome P450 monooxygenase atmQ (529 aa).

The next 2 helical transmembrane spans lie at 22–42 (YPFA…QQLA) and 51–71 (SWVN…IAAF). Cys467 is a heme binding site.

It belongs to the cytochrome P450 family. Heme serves as cofactor.

It localises to the membrane. It functions in the pathway secondary metabolite biosynthesis. Cytochrome P450 monooxygenase; part of the ATM2 gene cluster that mediates the biosynthesis of aflatrem, a tremorgenic mycotoxin with acute neurotoxic effects. Synthesis of geranylgeranyl diphosphate (GGPP) by AtmG (a GGPP synthase) precedes condensation of GGPP with indole 3-glycerol phosphate, followed by epoxidation and cyclization by AtmM (a FAD-dependent monooxygenase) and AtmC (a prenyltransferase) to produce paspaline. AtmB is also essential for paspaline production, but its exact role has not been identified yet. AtmP, a cytochrome P450 monooxygenase, subsequently converts paspaline to 13-desoxypaxilline via PC-M6 by removal of the C-30 methyl group and oxidation at C-10. AtmQ, a cytochrome P450 monooxygenase, then catalyzes the oxidation of 13-desoxypaxilline, first at C-7 to produce paspalicine and then at C-13 to form paspalinine. Finally, AtmD prenylates paspalinine to form aflatrem. The protein is Cytochrome P450 monooxygenase atmQ of Aspergillus flavus.